The sequence spans 122 residues: Basic phospholipase A2 Cdr-12 (122 aa).

7 disulfides stabilise this stretch: C26–C115, C28–C44, C43–C95, C49–C122, C50–C88, C57–C81, and C75–C86. Ca(2+)-binding residues include Y27, G29, and G31. H47 is a catalytic residue. D48 serves as a coordination point for Ca(2+). The active site involves D89.

Requires Ca(2+) as cofactor. In terms of tissue distribution, expressed by the venom gland.

The protein resides in the secreted. It catalyses the reaction a 1,2-diacyl-sn-glycero-3-phosphocholine + H2O = a 1-acyl-sn-glycero-3-phosphocholine + a fatty acid + H(+). In terms of biological role, snake venom phospholipase A2 (PLA2) that induces myonecrosis and edema upon intramuscular injections in mice. In vitro, causes a potent blockade of neuromuscular transmission in young chicken biventer cervicis preparation and produces cytotoxicity in murine C2C12 skeletal muscle myotubes and lack cytolytic activity upon myoblasts in vitro. PLA2 catalyzes the calcium-dependent hydrolysis of the 2-acyl groups in 3-sn-phosphoglycerides. This is Basic phospholipase A2 Cdr-12 from Crotalus durissus ruruima (South American rattlesnake).